The chain runs to 369 residues: Dehydrogenase pigH (369 aa).

In terms of domain architecture, Enoyl reductase (ER) spans 13–367 (KAPLLEVKAA…QGVSAKKIVV (355 aa)). Residue 44 to 49 (IDWLIQ) participates in NADP(+) binding. 2 N-linked (GlcNAc...) asparagine glycosylation sites follow: Asn79 and Asn101. NADP(+) contacts are provided by residues 197-200 (SRKN) and Tyr215. The helical transmembrane segment at 280–300 (TIIFFVSWIISFKFKGLLKGI) threads the bilayer. 360–361 (VS) serves as a coordination point for NADP(+).

Belongs to the zinc-containing alcohol dehydrogenase family.

It is found in the membrane. It functions in the pathway secondary metabolite biosynthesis. Dehydrogenase; part of the gene cluster that mediates the biosynthesis of azaphilone pigments (MonAzPs), a complex mixture of compounds with a common azaphilone skeleton very widely used as food colorants. Within the pathway, pigH might be involved in the late steps of yellow pigments monascin and ankaflavin biosynthesis. The first step of the pathway is performed by the nrPKS pigA that forms the hexaketide precursor from successive condensations of five malonyl-CoA units, with a simple acetyl-CoA starter unit. The role of esterase pigG is not clear, but it may play at most a supplementary role in the formation of the benzaldehyde produced by the pigA nrPKS. This very reactive benzaldehyde is intercepted by the pigC ketoreductase that to provide the first stable enzyme-free MonAzPs intermediate, 6-(4-hydroxy-2-oxopentyl)-3-methyl-2,4-dioxocyclohexane carbaldehyde, also known as M7PKS-1. The FAD-dependent monooxygenase pigN hydroxylates M7PKS-1 at C-4, which triggers the formation of the pyran ring. PigJ, pigK and pigD are involved in the acetylation of the pyran ring. PigJ and pigK form the two subunits of a dedicated fungal FAS that produces the side chain fatty acyl moiety of MonAzPs and pigD transfers the fatty acyl chain to the C-4 alcohol. PigM and pigO are involved in the elimination of the omega-1 alcohol. PigM acts as an O-acetyltransferase that synthesizes the putative O-11 acetyl intermediate whereas pigO eliminates acetic acid to yield an intermediate with a C10(11) double bond. The dehydration of the C-11 alcohol followed by the reduction of the C6(7) double bond by the NAD(P)H-dependent oxidoreductase pigE increases the electrophilicity of the C-5 ketone of the resulting acyl benzopyran. This in turn sets up the C-5 ketone for an intramolecular Knoevenagel aldol condensation with the C-20 enol of the side chain. This condensation affords the characteristic linear tricyclic carbon skeletons of the yellow pigments that serve as the common precursors for the classical yellow pigments monascin and ankaflavin, orange pigments rubopunctatin and monascorubrin, and red pigments ribropunctamine and monascorubramine. The FAD-dependent oxidoreductase pigF is especially invoved in the biosynthesis of orange and red pigments via desaturation of C6(7). The chain is Dehydrogenase pigH from Monascus ruber (Mold).